Here is a 193-residue protein sequence, read N- to C-terminus: CASP-like protein 1E1 (193 aa).

Residues 1–30 (MESQNKASLPVMDGLERRVVASQSEGASTC) lie on the Cytoplasmic side of the membrane. The helical transmembrane segment at 31 to 51 (DLLLRVLALVLTLAAAIVLGV) threads the bilayer. At 52–86 (DKQTKVVPIKIVDTLPAINLPVSAKWHYLSAFTYS) the chain is on the extracellular side. The helical transmembrane segment at 87–107 (VASNAIACSYAALSLVLAVSG) threads the bilayer. At 108–113 (KKGIMS) the chain is on the cytoplasmic side. Residues 114–134 (IVIVLDLLMVAMLFSSNGAAL) form a helical membrane-spanning segment. The Extracellular portion of the chain corresponds to 135 to 162 (AIGLMGYQGNSHVRWTKVCHVFGRFCNQ). A helical membrane pass occupies residues 163–183 (VAVSISLSLLGSILFLLLVGI). Residues 184–193 (TSLRLHKKSK) lie on the Cytoplasmic side of the membrane.

The protein belongs to the Casparian strip membrane proteins (CASP) family. As to quaternary structure, homodimer and heterodimers.

The protein localises to the cell membrane. This is CASP-like protein 1E1 from Populus trichocarpa (Western balsam poplar).